The sequence spans 366 residues: N-acetyl-6-hydroxytryptophan oxidase ivoB (366 aa).

Positions 1 to 18 (MHLLSSLAALAAAITVAF) are cleaved as a signal peptide. N-linked (GlcNAc...) asparagine glycosylation is found at N28 and N81. Residues H87 and H96 each contribute to the Cu cation site. Residues N114 and N121 are each glycosylated (N-linked (GlcNAc...) asparagine). H291 contacts Cu cation. The N-linked (GlcNAc...) asparagine glycan is linked to N319.

This sequence belongs to the tyrosinase family. It depends on Cu(2+) as a cofactor.

It functions in the pathway pigment biosynthesis. With respect to regulation, activity is inhibited by 2,3-dihydroxynaphthalene, phenylhydrazine, diethyl dithiocarbamate and 8-hydroxyquinolene. Nonribosomal peptide synthetase; part of the pathway that mediates the biosynthesis of the gray-brown conidiophore pigment. The first step of the pathway is performed by the nonribosomal peptide synthetase ivoA that catalyzes ATP-dependent unidirectional stereoinversion of L-tryptophan to D-tryptophan with complete conversion. While the stereoinversion is catalyzed by the epimerization (E) domain of ivoA, the terminal condensation (C) domain stereoselectively hydrolyzes D-tryptophanyl-S-phosphopantetheine thioester and thus represents a non-canonical C domain function. D-tryptophan is acetylated, probably by an endogenous acetyltransferase. N-acetyltryptophan is further 6-hydroxylated into N-acetyl-6-hydroxytryptophan (AHT) by the cytochrome P450 monooxygenase ivoC. N-acetyl-6-hydroxytryptophan is substrate of the N-acetyl-6-hydroxytryptophan oxidase ivoB to produce the gray-brown conidiophore pigment. This chain is N-acetyl-6-hydroxytryptophan oxidase ivoB, found in Emericella nidulans (strain FGSC A4 / ATCC 38163 / CBS 112.46 / NRRL 194 / M139) (Aspergillus nidulans).